Consider the following 248-residue polypeptide: NADP-dependent 3-hydroxy acid dehydrogenase YdfG (248 aa).

Residues 7–12, 32–33, 54–55, and Asn-81 contribute to the NADP(+) site; these read GATAGF, RR, and DV. Ser-134 contributes to the substrate binding site. Residues Tyr-147, Lys-151, and 177–185 each bind NADP(+); that span reads PGLVGGTEF. The Proton acceptor role is filled by Tyr-147.

This sequence belongs to the short-chain dehydrogenases/reductases (SDR) family. As to quaternary structure, homotetramer.

The catalysed reaction is 3-hydroxypropanoate + NADP(+) = 3-oxopropanoate + NADPH + H(+). It catalyses the reaction L-allo-threonine + NADP(+) = aminoacetone + CO2 + NADPH. Functionally, NADP-dependent dehydrogenase with broad substrate specificity acting on 3-hydroxy acids. Catalyzes the NADP-dependent oxidation of L-allo-threonine to L-2-amino-3-keto-butyrate, which is spontaneously decarboxylated into aminoacetone. Also acts on D-threonine, L-serine, D-serine, D-3-hydroxyisobutyrate, L-3-hydroxyisobutyrate, D-glycerate and L-glycerate. Able to catalyze the reduction of the malonic semialdehyde to 3-hydroxypropionic acid. YdfG is apparently supplementing RutE, the presumed malonic semialdehyde reductase involved in pyrimidine degradation since both are able to detoxify malonic semialdehyde. This is NADP-dependent 3-hydroxy acid dehydrogenase YdfG from Salmonella typhi.